Reading from the N-terminus, the 505-residue chain is L-arabinose isomerase (505 aa).

Positions 308, 335, 352, and 453 each coordinate Mn(2+).

Belongs to the arabinose isomerase family. Mn(2+) serves as cofactor.

It catalyses the reaction beta-L-arabinopyranose = L-ribulose. Its pathway is carbohydrate degradation; L-arabinose degradation via L-ribulose; D-xylulose 5-phosphate from L-arabinose (bacterial route): step 1/3. Functionally, catalyzes the conversion of L-arabinose to L-ribulose. The polypeptide is L-arabinose isomerase (Bifidobacterium animalis subsp. lactis (strain AD011)).